We begin with the raw amino-acid sequence, 236 residues long: 15,16-dihydrobiliverdin:ferredoxin oxidoreductase (236 aa).

This sequence belongs to the HY2 family.

It carries out the reaction 15,16-dihydrobiliverdin + oxidized 2[4Fe-4S]-[ferredoxin] = biliverdin IXalpha + reduced 2[4Fe-4S]-[ferredoxin] + 2 H(+). In terms of biological role, catalyzes the two-electron reduction of biliverdin IX-alpha at the C15 methine bridge. The chain is 15,16-dihydrobiliverdin:ferredoxin oxidoreductase from Prochlorococcus marinus (strain MIT 9515).